The chain runs to 300 residues: ATP-dependent (S)-NAD(P)H-hydrate dehydratase (300 aa).

The YjeF C-terminal domain occupies 6-297; sequence YAGKIKEFIP…GCIHQSFTSL (292 aa). Residues Gly106 and 158 to 164 contribute to the (6S)-NADPHX site; that span reads NEVEFKR. ATP-binding positions include 188 to 192 and 218 to 227; these read KGSTD and GSNRRCGGQG. A (6S)-NADPHX-binding site is contributed by Asp228.

Belongs to the NnrD/CARKD family. It depends on Mg(2+) as a cofactor.

The catalysed reaction is (6S)-NADHX + ATP = ADP + phosphate + NADH + H(+). The enzyme catalyses (6S)-NADPHX + ATP = ADP + phosphate + NADPH + H(+). In terms of biological role, catalyzes the dehydration of the S-form of NAD(P)HX at the expense of ATP, which is converted to ADP. Together with NAD(P)HX epimerase, which catalyzes the epimerization of the S- and R-forms, the enzyme allows the repair of both epimers of NAD(P)HX, a damaged form of NAD(P)H that is a result of enzymatic or heat-dependent hydration. This is ATP-dependent (S)-NAD(P)H-hydrate dehydratase from Pediculus humanus subsp. corporis (Body louse).